Reading from the N-terminus, the 98-residue chain is PqqA binding protein (98 aa).

The protein belongs to the PqqD family. As to quaternary structure, monomer. Interacts with PqqE.

It participates in cofactor biosynthesis; pyrroloquinoline quinone biosynthesis. Functions as a PqqA binding protein and presents PqqA to PqqE, in the pyrroloquinoline quinone (PQQ) biosynthetic pathway. In Pseudomonas syringae pv. tomato (strain ATCC BAA-871 / DC3000), this protein is PqqA binding protein.